The primary structure comprises 1019 residues: Probable ubiquitination network signaling protein acrB (1019 aa).

The interval 1–142 is disordered; the sequence is MPRSSATARK…TGNKRSPSNA (142 aa). Over residues 33–63 the composition is skewed to low complexity; the sequence is NGHLNGNLNGGSASSSLSSSQVDLPSSRSSS. 3 stretches are compositionally biased toward polar residues: residues 68–83, 102–117, and 131–142; these read PTTTATSTKLNGTPDS, TDMSYVQNNGVASQTG, and SATGNKRSPSNA. The next 3 helical transmembrane spans lie at 163-183, 216-236, and 259-279; these read IAILIFLLQLPPMVLTLVQFL, LGTMIAMDGFCLLIWGLFMWT, and FGKNGGVNTLCVGIVLIMHLV. Disordered regions lie at residues 343-372, 580-603, 831-859, 879-905, and 963-1019; these read ARRSMAKNRTPNPPRTGKRIDTEASAGSQT, DAEQVSSVSTPPQPSYRPSSPTTT, LDPGPLTPEGNLPGTNPFSESALPLGALT, SPLQTASSPVGASSSHPTSPVQQPSYL, and DKRS…GKTN. A coiled-coil region spans residues 602–788; it reads TTLKNSIVNA…REQDQAKLEA (187 aa). A compositionally biased stretch (gly residues) spans 992–1008; it reads RGSGSGSNGSGGSGSGS.

It belongs to the acrB family.

The protein resides in the membrane. Its function is as follows. Component of the regulatory network controlling carbon source utilization through ubiquitination and deubiquitination involving creA, creB, creC, creD and acrB. Involved in resistance to acriflavine, and required for normal growth on a range of sole carbon sources, including fructose, cellobiose, raffinose, and starch, and reduced utilization of amino acids, including GABA and beta-alanine, as sole carbon and nitrogen sources. In Neosartorya fischeri (strain ATCC 1020 / DSM 3700 / CBS 544.65 / FGSC A1164 / JCM 1740 / NRRL 181 / WB 181) (Aspergillus fischerianus), this protein is Probable ubiquitination network signaling protein acrB (acrB).